A 164-amino-acid polypeptide reads, in one-letter code: Protein SprT (164 aa).

Positions 14–156 (QQAETFFKRT…LCRRCREPLV (143 aa)) constitute a SprT-like domain. Histidine 69 contacts Zn(2+). Residue glutamate 70 is part of the active site. A Zn(2+)-binding site is contributed by histidine 73.

This sequence belongs to the SprT family. The cofactor is Zn(2+).

It is found in the cytoplasm. This Pseudomonas savastanoi pv. phaseolicola (strain 1448A / Race 6) (Pseudomonas syringae pv. phaseolicola (strain 1448A / Race 6)) protein is Protein SprT.